A 1555-amino-acid chain; its full sequence is Regulating synaptic membrane exocytosis protein 2 (1555 aa).

A disordered region spans residues 1-35; sequence MSAPLGPRGRPAPTPAASQPPPQPEMPDLSHLTEE. The segment covering 10-25 has biased composition (pro residues); it reads RPAPTPAASQPPPQPE. The region spanning 26–154 is the RabBD domain; it reads MPDLSHLTEE…TKSGAWFYNS (129 aa). An FYVE-type zinc finger spans residues 86–142; the sequence is KGDAPTCGICHKTKFADGCGHNCSYCQTKFCARCGGRVSLRSNKVMWVCNLCRKQQE. Residues cysteine 92, cysteine 95, cysteine 108, cysteine 111, cysteine 116, cysteine 119, cysteine 134, and cysteine 137 each contribute to the Zn(2+) site. Polar residues predominate over residues 154 to 163; that stretch reads SGSNTPQQPD. The tract at residues 154-530 is disordered; sequence SGSNTPQQPD…STPEYTSCDD (377 aa). Basic and acidic residues predominate over residues 170–185; the sequence is LRSEEAPQEKKAKLHE. A compositionally biased stretch (polar residues) spans 259 to 268; the sequence is YVPSDSTMPR. 4 stretches are compositionally biased toward basic and acidic residues: residues 287–298, 317–335, 351–370, and 379–403; these read EPDHLNYRDSNR, RDEYERQRREEEYQARYRS, EQMRIHAEVSRARHERRHSD, and EDSRISLLRMDRPSRQRSVSERRAA. Residue serine 369 is modified to Phosphoserine. Residues 418–432 show a composition bias toward polar residues; that stretch reads AQGQSSYPQRTTNHS. Residues 444-461 show a composition bias toward basic and acidic residues; that stretch reads DRPELRRADSLRKQHHLD. Residues 479–490 are compositionally biased toward polar residues; that stretch reads RNDSLSSDQSES. Basic residues predominate over residues 497 to 506; it reads RPHKSKKGGK. The region spanning 590–676 is the PDZ domain; sequence DGSVPRDSGA…EPQVELVVSR (87 aa). Threonine 611 carries the phosphothreonine modification. The segment at 682–716 is disordered; that stretch reads PRIPDSTHAQLESSSSSFESQKMDRPSISVTSPMS. Serine 713 and serine 716 each carry phosphoserine. Residues 743–866 form the C2 1 domain; sequence FVPRVQIKLW…ALLDDEPHWY (124 aa). 5 disordered regions span residues 877–913, 935–1145, 1180–1207, 1268–1288, and 1307–1332; these read PLPHPSPYMPRRQLHGESPTRRLQRSKRISDSEVSDY, STLS…KRNS, YRSGWDPHRGADTVSTKSSDSDVSDVSA, LEKNDGSQSDTAVGALGTSGK, and KSRSASQLSQTEGGGKKLRSTVQRST. Residues 935-953 show a composition bias toward polar residues; the sequence is STLSVPEQVMSSNHCSPSG. Composition is skewed to basic and acidic residues over residues 996–1014 and 1025–1071; these read RMDRHRVMDDHYSSERDSH and QTSE…ERAD. The segment covering 1092–1114 has biased composition (low complexity); the sequence is ALSRSHPRTGSVQTSPSSTPVTG. Serine 1106 carries the phosphoserine modification. Basic and acidic residues-rich tracts occupy residues 1128-1141 and 1180-1190; these read TLERMITEDMDSTR and YRSGWDPHRGA. Phosphoserine is present on residues serine 1200 and serine 1276. The region spanning 1401–1519 is the C2 2 domain; sequence AMGDIQVGMM…ELSNMVIGWF (119 aa). 2 positions are modified to phosphoserine: serine 1540 and serine 1543.

As to quaternary structure, heterodimer with PCLO. Part of a ternary complex involving PCLO and EPAC2. Interacts with RAB3C, RAB3D and RAB26. Binds RAB3A and RAB3B that have been activated by GTP-binding. Interacts with TSPOAP1 and RIMBP2. Interacts with PPFIA3 and PPFIA4. Interacts via its zinc finger with the first C2 domain of UNC13A. Forms a complex consisting of UNC13A, RIMS2 and RAB3A. Highly expressed in hippocampus, brain cortex, cerebellum and olfactory bulb. Detected at intermediate levels in midbrain, hindbrain and spinal cord, and at low levels in testis.

It localises to the cell membrane. The protein resides in the synapse. The protein localises to the presynaptic cell membrane. Functionally, rab effector involved in exocytosis. May act as scaffold protein. Plays a role in dendrite formation by melanocytes. The protein is Regulating synaptic membrane exocytosis protein 2 (Rims2) of Rattus norvegicus (Rat).